We begin with the raw amino-acid sequence, 127 residues long: KDIPRCELVKILRRHGFEGFVGKTVANWVCLVKHESGYRTTAFNNNGPNSRDYGIFQINSKYWCNDGKTRGSKNACNINCSKLRDDNIADDIQCAKKIAREARGLTPWVAWKKYCQGKDLSSYVRGC.

In terms of domain architecture, C-type lysozyme spans 1–127 (KDIPRCELVK…KDLSSYVRGC (127 aa)). 4 disulfides stabilise this stretch: Cys-6-Cys-127, Cys-30-Cys-115, Cys-64-Cys-80, and Cys-76-Cys-94. Catalysis depends on residues Glu-35 and Asp-52. Ca(2+) contacts are provided by Lys-82, Asp-85, Asn-87, Asp-90, and Asp-91.

This sequence belongs to the glycosyl hydrolase 22 family. As to quaternary structure, monomer. Ca(2+) serves as cofactor.

Its subcellular location is the secreted. It carries out the reaction Hydrolysis of (1-&gt;4)-beta-linkages between N-acetylmuramic acid and N-acetyl-D-glucosamine residues in a peptidoglycan and between N-acetyl-D-glucosamine residues in chitodextrins.. Functionally, lysozymes have primarily a bacteriolytic function; those in tissues and body fluids are associated with the monocyte-macrophage system and enhance the activity of immunoagents. This Columba livia (Rock dove) protein is Lysozyme C (LYZ).